The sequence spans 378 residues: Transcription factor YY2 (378 aa).

Residues 39–113 (LETSVGQTIE…DNLLFSPEFG (75 aa)) form a mediates transcriptional activation region. A mediates transcriptional repression region spans residues 243 to 378 (EFTSMRPKKP…LTHVKNKNDQ (136 aa)). C2H2-type zinc fingers lie at residues 260-284 (IACSHKGCEKMFKDNSAMRKHLHIH), 289-311 (HVCAECGKAFVESSKLKRHQLVH), 317-341 (YQCTFEGCGRRFSLDFNLRTHVRIH), and 347-371 (FVCPFDACNKKFAQSTNLKSHILTH).

It belongs to the YY transcription factor family. In terms of tissue distribution, weakly expressed by neuronal and glial cells in the cerebral cortex. Expressed by Purkinje cells and in the granular layers of the cerebellum. Expressed in all layers of spermatocytes in testis but not detected in sperm cells.

The protein localises to the nucleus. Functions as a multifunctional transcription factor that may exhibit positive and negative control on a large number of genes. May antagonize YY1 and function in development and differentiation. The polypeptide is Transcription factor YY2 (Yy2) (Mus musculus (Mouse)).